Reading from the N-terminus, the 3394-residue chain is Protein PFC0760c (3394 aa).

Low complexity-rich tracts occupy residues 471-508, 515-528, and 786-841; these read NNND…NYNN, NMNS…NNLH, and NNQN…NQNN. Disordered stretches follow at residues 471 to 539, 779 to 844, 1038 to 1099, 1892 to 1918, 2648 to 2693, 2835 to 2909, 3000 to 3057, and 3107 to 3394; these read NNND…DENN, MSSN…NAGI, NKKK…NNDD, TTTT…NNND, KMDL…DNHL, AKNE…NSNN, VSVG…DVNT, and DYVN…NSEE. The segment covering 1038–1097 has biased composition (basic and acidic residues); it reads NKKKNNDGDNKSQEDDDGNKKKNNDGDNKSQEDDDGNKKKNNDGDNKSQEDDYGNKKKNN. Residues 2657-2671 show a composition bias toward acidic residues; it reads GDDDDDDDDDDDDDN. A compositionally biased stretch (low complexity) spans 2672 to 2686; that stretch reads NNNNNNNNNNNNNNM. Over residues 2836-2846 the composition is skewed to polar residues; that stretch reads KNENYPVSTHY. Low complexity-rich tracts occupy residues 2855 to 2865 and 2872 to 2909; these read DNINNDNNNDN and NDNI…NSNN. 2 stretches are compositionally biased toward acidic residues: residues 3007–3047 and 3147–3257; these read DNND…EEKE and DDDE…DDND. Basic and acidic residues predominate over residues 3258-3292; it reads NDHNDDNNDEEKYSCHDDKNEHTNNDLLNIDHDNN. Positions 3300–3309 are enriched in polar residues; that stretch reads LYSTYNVSVS. Positions 3310–3320 are enriched in basic and acidic residues; it reads HNKDPSNKENE. Over residues 3321 to 3330 the composition is skewed to polar residues; the sequence is IQNLISIDSS. Acidic residues predominate over residues 3331 to 3379; sequence NENDENDENDENDENDENDENDENDENDENDENDEKDENDENDENDENF. The segment covering 3385 to 3394 has biased composition (polar residues); it reads GTLNEMNSEE.

The chain is Protein PFC0760c from Plasmodium falciparum (isolate 3D7).